The following is a 130-amino-acid chain: Small ribosomal subunit protein uS9 (130 aa).

It belongs to the universal ribosomal protein uS9 family.

This Ralstonia nicotianae (strain ATCC BAA-1114 / GMI1000) (Ralstonia solanacearum) protein is Small ribosomal subunit protein uS9.